The primary structure comprises 254 residues: Very-long-chain (3R)-3-hydroxyacyl-CoA dehydratase 2 (254 aa).

At A2 the chain carries N-acetylalanine. Residues 2-41 lie on the Cytoplasmic side of the membrane; that stretch reads AAVAATAAAKGNGGGGGRAGAGDASGTRKKKGPGPLATAY. The segment at 11-33 is disordered; sequence KGNGGGGGRAGAGDASGTRKKKG. Over residues 12–21 the composition is skewed to gly residues; sequence GNGGGGGRAG. The helical transmembrane segment at 42–60 threads the bilayer; it reads LVIYNVVMTAGWLVIAVGL. The Lumenal portion of the chain corresponds to 61–79; that stretch reads VRAYLAKGSYHSLYYSIEK. A helical transmembrane segment spans residues 80–97; it reads PLKFFQTGALLEILHCAI. At 98 to 107 the chain is on the cytoplasmic side; sequence GIVPSSVVLT. Residues 108–125 traverse the membrane as a helical segment; it reads SFQVMSRVFLIWAVTHSV. The Lumenal segment spans residues 126 to 130; it reads KEVQS. A helical transmembrane segment spans residues 131 to 146; the sequence is EDSVLLFVIAWTITEI. Topologically, residues 147–169 are cytoplasmic; it reads IRYSFYTFSLLNHLPYLIKWARY. The chain crosses the membrane as a helical span at residues 170-187; that stretch reads TLFIVLYPMGVSGELLTI. Active-site residues include Y176 and E183. At 188-217 the chain is on the lumenal side; sequence YAALPFVRQAGLYSISLPNKYNFSFDYYAF. The interval 198 to 214 is may be involved in interaction with TECR; it reads GLYSISLPNKYNFSFDY. N-linked (GlcNAc...) asparagine glycosylation occurs at N209. Residues 218-235 form a helical membrane-spanning segment; sequence LILIMISYIPIFPQLYFH. Over 236–254 the chain is Cytoplasmic; that stretch reads MIHQRRKILSHTEEHKKFE.

It belongs to the very long-chain fatty acids dehydratase HACD family. In terms of assembly, may interact with enzymes of the ELO family (including ELOVL1); with those enzymes that mediate condensation, the first of the four steps of the reaction cycle responsible for fatty acids elongation, may be part of a larger fatty acids elongase complex. Interacts with BCAP31. Interacts (via the third lumenal loop) with TECR. In terms of tissue distribution, highly expressed in testis, spleen, prostate, colon and heart, followed by moderate expression in thymus, ovary, small intestine, peripheral blood leukocytes, liver, skeletal muscle and pancreas. Weakly detected in kidney, placenta, brain and lung.

The protein localises to the endoplasmic reticulum membrane. It catalyses the reaction a very-long-chain (3R)-3-hydroxyacyl-CoA = a very-long-chain (2E)-enoyl-CoA + H2O. The enzyme catalyses (3R)-hydroxyhexadecanoyl-CoA = (2E)-hexadecenoyl-CoA + H2O. It carries out the reaction (3R)-hydroxyoctadecanoyl-CoA = (2E)-octadecenoyl-CoA + H2O. The catalysed reaction is (3R)-hydroxyeicosanoyl-CoA = (2E)-eicosenoyl-CoA + H2O. It catalyses the reaction (3R)-hydroxydocosanoyl-CoA = (2E)-docosenoyl-CoA + H2O. The enzyme catalyses (3R)-hydroxytetracosanoyl-CoA = (2E)-tetracosenoyl-CoA + H2O. It carries out the reaction (3R)-hydroxyhexacosanoyl-CoA = (2E)-hexacosenoyl-CoA + H2O. The protein operates within lipid metabolism; fatty acid biosynthesis. Its function is as follows. Catalyzes the third of the very long-chain fatty acids (VLCFA) elongation four-step cycle (condensation, reduction, dehydration, and reduction). This endoplasmic reticulum-elongation process is characterized by the addition of two carbons to the lipid chain through each cycle. This enzyme catalyzes the dehydration of the 3-hydroxyacyl-CoA intermediate into trans-2,3-enoyl-CoA, within each cycle of elongation. Therefore, it participates in the production of various VLCFAs involved in multiple biological processes as precursors of membrane lipids and lipid mediators. This Homo sapiens (Human) protein is Very-long-chain (3R)-3-hydroxyacyl-CoA dehydratase 2.